The primary structure comprises 267 residues: Pyridoxine 5'-phosphate synthase (267 aa).

Residue Asn8 participates in 3-amino-2-oxopropyl phosphate binding. Residue 10–11 coordinates 1-deoxy-D-xylulose 5-phosphate; it reads DH. Residue Arg19 participates in 3-amino-2-oxopropyl phosphate binding. Residue His44 is the Proton acceptor of the active site. Residues Arg46 and His51 each coordinate 1-deoxy-D-xylulose 5-phosphate. The active-site Proton acceptor is Glu71. Thr101 is a binding site for 1-deoxy-D-xylulose 5-phosphate. The Proton donor role is filled by His219. 3-amino-2-oxopropyl phosphate-binding positions include Gly220 and 241–242; that span reads GH.

The protein belongs to the PNP synthase family. In terms of assembly, homooctamer; tetramer of dimers.

The protein localises to the cytoplasm. It carries out the reaction 3-amino-2-oxopropyl phosphate + 1-deoxy-D-xylulose 5-phosphate = pyridoxine 5'-phosphate + phosphate + 2 H2O + H(+). It functions in the pathway cofactor biosynthesis; pyridoxine 5'-phosphate biosynthesis; pyridoxine 5'-phosphate from D-erythrose 4-phosphate: step 5/5. Functionally, catalyzes the complicated ring closure reaction between the two acyclic compounds 1-deoxy-D-xylulose-5-phosphate (DXP) and 3-amino-2-oxopropyl phosphate (1-amino-acetone-3-phosphate or AAP) to form pyridoxine 5'-phosphate (PNP) and inorganic phosphate. In Helicobacter hepaticus (strain ATCC 51449 / 3B1), this protein is Pyridoxine 5'-phosphate synthase.